Reading from the N-terminus, the 442-residue chain is Tubby-related protein 3 (442 aa).

Positions 23–68 (MRQAKLDYQRLLLEKRQRKKRLEPFMVQPNPEARLRRAKPRASDEQ) are required for association with the IFT complex A (IFT-A). Residues 101 to 177 (PSVSSSVVEE…TSGSATAAQP (77 aa)) form a disordered region. Over residues 145–162 (GISQSACLERPNSASSQN) the composition is skewed to polar residues. The segment covering 163 to 175 (STDTGTSGSATAA) has biased composition (low complexity).

The protein belongs to the TUB family. As to quaternary structure, associates with the IFT complex A (IFT-A). Interacts with SIRT1. As to expression, expressed at high levels in testis, ovaries, thyroid, and spinal cord.

Its subcellular location is the nucleus. The protein resides in the cell membrane. It localises to the cell projection. It is found in the cilium. The protein localises to the cytoplasm. Its subcellular location is the secreted. In terms of biological role, negative regulator of the Shh signaling transduction pathway: recruited to primary cilia via association with the IFT complex A (IFT-A) and is required for recruitment of G protein-coupled receptor GPR161 to cilia, a promoter of PKA-dependent basal repression machinery in Shh signaling. Binds to phosphorylated inositide (phosphoinositide) lipids. Both IFT-A- and phosphoinositide-binding properties are required to regulate ciliary G protein-coupled receptor trafficking. During adipogenesis, regulates ciliary trafficking of FFAR4 in preadipocytes. This Homo sapiens (Human) protein is Tubby-related protein 3.